Consider the following 291-residue polypeptide: MVREQYTTATEGICIERPENQYVYKIGIYGWRKRCLYLFVLLLLIILVVNLALTIWILKVMWFSPAGMGHLCVTKDGLRLEGESEFLFPLYAKEIHSRVDSSLLLQSTQNVTVNARNSEGEVTGRLKVGPKMVEVQNQQFQINSNDGKPLFTVDEKEVVVGTDKLRVTGPEGALFEHSVETPLVRADPFQDLRLESPTRSLSMDAPRGVHIQAHAGKIEALSQMDILFHSSDGMLVLDAETVCLPKLVQGTWGPSGSSQSLYEICVCPDGKLYLSVAGVSTTCQEHNHICL.

The Cytoplasmic portion of the chain corresponds to Met1–Tyr37. The chain crosses the membrane as a helical; Signal-anchor for type II membrane protein span at residues Leu38–Leu58. At Lys59–Leu291 the chain is on the extracellular side. N-linked (GlcNAc...) asparagine glycosylation is present at Asn110. 2 disulfide bridges follow: Cys265–Cys290 and Cys267–Cys283.

It belongs to the sarcoglycan beta/delta/gamma/zeta family. In terms of assembly, interacts with the syntrophin SNTA1. Cross-link to form 2 major subcomplexes: one consisting of SGCB, SGCD and SGCG and the other consisting of SGCB and SGCD. The association between SGCB and SGCG is particularly strong while SGCA is loosely associated with the other sarcoglycans. Interacts with FLNC. Expressed in skeletal and heart muscle.

It is found in the cell membrane. It localises to the sarcolemma. The protein resides in the cytoplasm. The protein localises to the cytoskeleton. Component of the sarcoglycan complex, a subcomplex of the dystrophin-glycoprotein complex which forms a link between the F-actin cytoskeleton and the extracellular matrix. This Homo sapiens (Human) protein is Gamma-sarcoglycan (SGCG).